The following is a 207-amino-acid chain: MARYLGPKAKLARREGTDLFLKSARRALSDKCKLDTKPGQHGRTSGSRTSDYGNQLREKQKVKRIYGVLERQFRRYFAEAERRKGNTGETLLQLLESRLDNVVYRMGFGSTRAEARQLVSHCAILLNGSPVNIPSIQVKPGDVVAIREKAKKQARITESLNLVGQMAAVTWVSVDAAKLEGTFKQVPDREDISGEINESLIVELYSR.

The disordered stretch occupies residues 31–54; the sequence is KCKLDTKPGQHGRTSGSRTSDYGN. Residues 42 to 53 show a composition bias toward polar residues; it reads GRTSGSRTSDYG. In terms of domain architecture, S4 RNA-binding spans 97 to 158; that stretch reads SRLDNVVYRM…KAKKQARITE (62 aa).

The protein belongs to the universal ribosomal protein uS4 family. In terms of assembly, part of the 30S ribosomal subunit. Contacts protein S5. The interaction surface between S4 and S5 is involved in control of translational fidelity.

In terms of biological role, one of the primary rRNA binding proteins, it binds directly to 16S rRNA where it nucleates assembly of the body of the 30S subunit. Functionally, with S5 and S12 plays an important role in translational accuracy. This chain is Small ribosomal subunit protein uS4, found in Polynucleobacter asymbioticus (strain DSM 18221 / CIP 109841 / QLW-P1DMWA-1) (Polynucleobacter necessarius subsp. asymbioticus).